A 396-amino-acid polypeptide reads, in one-letter code: NADH-quinone oxidoreductase subunit D (396 aa).

The protein belongs to the complex I 49 kDa subunit family. NDH-1 is composed of 14 different subunits. Subunits NuoB, C, D, E, F, and G constitute the peripheral sector of the complex.

It is found in the cell inner membrane. The catalysed reaction is a quinone + NADH + 5 H(+)(in) = a quinol + NAD(+) + 4 H(+)(out). In terms of biological role, NDH-1 shuttles electrons from NADH, via FMN and iron-sulfur (Fe-S) centers, to quinones in the respiratory chain. The immediate electron acceptor for the enzyme in this species is believed to be ubiquinone. Couples the redox reaction to proton translocation (for every two electrons transferred, four hydrogen ions are translocated across the cytoplasmic membrane), and thus conserves the redox energy in a proton gradient. The polypeptide is NADH-quinone oxidoreductase subunit D (Bartonella bacilliformis (strain ATCC 35685 / KC583 / Herrer 020/F12,63)).